A 519-amino-acid chain; its full sequence is RxLR effector protein PITG_15278 (519 aa).

A signal peptide spans 1 to 24 (MHFIYRVVLVLAAFALFKVDSISA). The short motif at 49-59 (RQLRVMDDNER) is the RxLR-dEER element.

The protein belongs to the RxLR effector family.

It is found in the secreted. Its subcellular location is the host cytoplasm. Effector that enhances P.infestans colonization of Nicotiana benthamiana leaves. This is RxLR effector protein PITG_15278 from Phytophthora infestans (strain T30-4) (Potato late blight agent).